Here is a 218-residue protein sequence, read N- to C-terminus: Twisted gastrulation protein homolog 1-B (218 aa).

Positions 1–25 (MKPSFLHIPAAALLLCSLWILPIHC) are cleaved as a signal peptide. Residues asparagine 52, asparagine 81, and asparagine 147 are each glycosylated (N-linked (GlcNAc...) asparagine).

Belongs to the twisted gastrulation protein family. In terms of assembly, binds directly to bmp2, bmp4 and bmp7 and can form a ternary complex with bmps and chordin, thus preventing the binding of bmps to their cell surface receptors.

The protein resides in the secreted. Functionally, involved in dorsal-ventral patterning, permitting peak BMP signaling by antagonizing the residual anti-BMP activity of the cleavage products of chrd. Functions to promote the formation of ventral mesoderm by increasing the activity of bmp7 and other BMPS. Seems to antagonize BMP signaling by forming ternary complexes with chrd and BMPs, thereby preventing BMPs from binding to their receptors. In addition to the anti-BMP function, also has pro-BMP activity, partly mediated by cleavage and degradation of chrd, which releases BMPs from ternary complexes. May be an important modulator of BMP-regulated cartilage development and chondrocyte differentiation. In Xenopus laevis (African clawed frog), this protein is Twisted gastrulation protein homolog 1-B (twsg1-b).